We begin with the raw amino-acid sequence, 533 residues long: GMP synthase [glutamine-hydrolyzing] (533 aa).

The 195-residue stretch at 12 to 206 folds into the Glutamine amidotransferase type-1 domain; it reads TILVLDFGSQ…AVGICGAEQK (195 aa). The Nucleophile role is filled by C88. Catalysis depends on residues H180 and E182. The GMPS ATP-PPase domain occupies 207–408; sequence WTMAEFIGQE…LGISPELVGR (202 aa). 235–241 contributes to the ATP binding site; the sequence is SGGVDST. Positions 308, 470, 525, and 531 each coordinate XMP.

As to quaternary structure, homodimer. The cofactor is Mg(2+).

The protein localises to the cytoplasm. It is found in the cytosol. It carries out the reaction XMP + L-glutamine + ATP + H2O = GMP + L-glutamate + AMP + diphosphate + 2 H(+). It participates in purine metabolism; GMP biosynthesis; GMP from XMP (L-Gln route): step 1/1. Its function is as follows. Catalyzes the conversion of xanthine monophosphate (XMP) to GMP in the presence of glutamine and ATP through an adenyl-XMP intermediate. The chain is GMP synthase [glutamine-hydrolyzing] (gua1) from Emericella nidulans (strain FGSC A4 / ATCC 38163 / CBS 112.46 / NRRL 194 / M139) (Aspergillus nidulans).